The sequence spans 457 residues: Na(+)/H(+) antiporter NhaA (457 aa).

11 helical membrane passes run 33-53 (ASGI…NSPL), 76-96 (FSLA…VVGM), 114-134 (LLPL…FLAF), 142-162 (AGWG…LTLL), 172-192 (VFVT…IALF), 196-216 (GLQL…ALMS), 235-255 (YALH…GLAI), 308-328 (FVHA…ALAN), 349-369 (TALA…WIAV), 385-405 (LIGV…IAGL), and 419-439 (VGIL…LRLT).

It belongs to the NhaA Na(+)/H(+) (TC 2.A.33) antiporter family.

The protein localises to the cell inner membrane. The catalysed reaction is Na(+)(in) + 2 H(+)(out) = Na(+)(out) + 2 H(+)(in). In terms of biological role, na(+)/H(+) antiporter that extrudes sodium in exchange for external protons. This Anaeromyxobacter sp. (strain Fw109-5) protein is Na(+)/H(+) antiporter NhaA.